A 209-amino-acid chain; its full sequence is dTTP/UTP pyrophosphatase (209 aa).

D79 functions as the Proton acceptor in the catalytic mechanism.

It belongs to the Maf family. YhdE subfamily. A divalent metal cation is required as a cofactor.

Its subcellular location is the cytoplasm. The catalysed reaction is dTTP + H2O = dTMP + diphosphate + H(+). It catalyses the reaction UTP + H2O = UMP + diphosphate + H(+). Its function is as follows. Nucleoside triphosphate pyrophosphatase that hydrolyzes dTTP and UTP. May have a dual role in cell division arrest and in preventing the incorporation of modified nucleotides into cellular nucleic acids. This Bradyrhizobium diazoefficiens (strain JCM 10833 / BCRC 13528 / IAM 13628 / NBRC 14792 / USDA 110) protein is dTTP/UTP pyrophosphatase.